Consider the following 140-residue polypeptide: Small ribosomal subunit protein uS12 (140 aa).

The segment at 1–28 (MPTINQLVRKSRKALEKKSTAPALQKGY) is disordered. Asp-102 carries the 3-methylthioaspartic acid modification. Residues 119 to 140 (GVDKRRQSRSKYGAKRPKEAKK) form a disordered region. A compositionally biased stretch (basic residues) spans 124-140 (RQSRSKYGAKRPKEAKK).

This sequence belongs to the universal ribosomal protein uS12 family. Part of the 30S ribosomal subunit. Contacts proteins S8 and S17. May interact with IF1 in the 30S initiation complex.

In terms of biological role, with S4 and S5 plays an important role in translational accuracy. Functionally, interacts with and stabilizes bases of the 16S rRNA that are involved in tRNA selection in the A site and with the mRNA backbone. Located at the interface of the 30S and 50S subunits, it traverses the body of the 30S subunit contacting proteins on the other side and probably holding the rRNA structure together. The combined cluster of proteins S8, S12 and S17 appears to hold together the shoulder and platform of the 30S subunit. In Clostridioides difficile (strain 630) (Peptoclostridium difficile), this protein is Small ribosomal subunit protein uS12.